The following is an 88-amino-acid chain: Small ribosomal subunit protein uS17 (88 aa).

It belongs to the universal ribosomal protein uS17 family. As to quaternary structure, part of the 30S ribosomal subunit.

In terms of biological role, one of the primary rRNA binding proteins, it binds specifically to the 5'-end of 16S ribosomal RNA. In Lactobacillus gasseri (strain ATCC 33323 / DSM 20243 / BCRC 14619 / CIP 102991 / JCM 1131 / KCTC 3163 / NCIMB 11718 / NCTC 13722 / AM63), this protein is Small ribosomal subunit protein uS17.